Consider the following 102-residue polypeptide: MAFTQALVTVLALLAGTLPHRHSENSPPKKANGDKCVHHTQCSSDCCLIDLERSGAFCTPKSRIGMGCLPQTKGSLNIMCPCRSGLNCHSKDPTCPRRCQMI.

The N-terminal stretch at 1 to 23 (MAFTQALVTVLALLAGTLPHRHS) is a signal peptide. 5 disulfides stabilise this stretch: cysteine 36–cysteine 47, cysteine 42–cysteine 58, cysteine 46–cysteine 80, cysteine 68–cysteine 88, and cysteine 82–cysteine 99.

This sequence belongs to the colipase family.

The protein localises to the secreted. This Mus musculus (Mouse) protein is Colipase-like protein 2 (Clpsl2).